We begin with the raw amino-acid sequence, 72 residues long: ATP synthase subunit c (72 aa).

2 helical membrane-spanning segments follow: residues methionine 1–isoleucine 21 and phenylalanine 49–valine 69.

Belongs to the ATPase C chain family. F-type ATPases have 2 components, F(1) - the catalytic core - and F(0) - the membrane proton channel. F(1) has five subunits: alpha(3), beta(3), gamma(1), delta(1), epsilon(1). F(0) has three main subunits: a(1), b(2) and c(10-14). The alpha and beta chains form an alternating ring which encloses part of the gamma chain. F(1) is attached to F(0) by a central stalk formed by the gamma and epsilon chains, while a peripheral stalk is formed by the delta and b chains.

It is found in the cell membrane. In terms of biological role, f(1)F(0) ATP synthase produces ATP from ADP in the presence of a proton or sodium gradient. F-type ATPases consist of two structural domains, F(1) containing the extramembraneous catalytic core and F(0) containing the membrane proton channel, linked together by a central stalk and a peripheral stalk. During catalysis, ATP synthesis in the catalytic domain of F(1) is coupled via a rotary mechanism of the central stalk subunits to proton translocation. Functionally, key component of the F(0) channel; it plays a direct role in translocation across the membrane. A homomeric c-ring of between 10-14 subunits forms the central stalk rotor element with the F(1) delta and epsilon subunits. The sequence is that of ATP synthase subunit c from Bacillus cytotoxicus (strain DSM 22905 / CIP 110041 / 391-98 / NVH 391-98).